The chain runs to 529 residues: Delayed-rectifier potassium channel regulatory subunit KCNS1 (529 aa).

At 1-217 the chain is on the cytoplasmic side; it reads MLMLLVRGTH…LTMENPGYSL (217 aa). Residues 218–239 form a helical membrane-spanning segment; it reads PSKLFSCVSISVVLASIAAMCI. At 240 to 270 the chain is on the extracellular side; that stretch reads HSLPEYQAREAAAAVAAVAAGRSPEGVRDDP. A helical membrane pass occupies residues 271 to 293; the sequence is VLRRLEYFCIAWFSFEVSSRLLL. Over 294 to 304 the chain is Cytoplasmic; it reads APSTRNFFCHP. Residues 305–322 form a helical membrane-spanning segment; that stretch reads LNLIDIVSVLPFYLTLLA. The Extracellular segment spans residues 323 to 340; sequence GVALGDQGGTGGKELGHL. Residues 341–361 traverse the membrane as a helical; Voltage-sensor segment; it reads GKVVQVFRLMRIFRVLKLARH. Topologically, residues 362–376 are cytoplasmic; sequence STGLRSLGATLKHSY. The helical transmembrane segment at 377–398 threads the bilayer; it reads REVGILLLYLAVGVSVFSGVAY. At 399 to 411 the chain is on the extracellular side; it reads TAEKEEDVGFNTI. Residues 412 to 423 constitute an intramembrane region (helical); that stretch reads PACWWWGTVSMT. The short motif at 424-429 is the Selectivity filter element; sequence TVGYGD. Residues 424-431 lie within the membrane without spanning it; that stretch reads TVGYGDVV. At 432-438 the chain is on the extracellular side; it reads PVTVAGK. The chain crosses the membrane as a helical span at residues 439 to 467; sequence LAASGCILGGILVVALPITIIFNKFSHFY. At 468–529 the chain is on the cytoplasmic side; that stretch reads RRQKALEAAV…PSEPPHPQMY (62 aa). Positions 496–529 are disordered; sequence SEASLETSRETSQEGRSADLETQAPSEPPHPQMY. The span at 502-514 shows a compositional bias: basic and acidic residues; the sequence is TSRETSQEGRSAD.

The protein belongs to the potassium channel family. S (TC 1.A.1.2) subfamily. Kv9.1/KCNS1 sub-subfamily. In terms of assembly, heterotetramer with KCNB1. Heterotetramer with KCNB2. Does not form homomultimers.

The protein localises to the cell membrane. Its function is as follows. Potassium channel regulatory subunit that modulate the delayed rectifier voltage-gated potassium channel activity of KCNB1 and KCNB2 by altering their kinetics, expression levels, and shifting the half-inactivation potential to more polarized values. While it does not form functional channels on its own, it can form functional heterotetrameric channels with KCNB1 and KCNB2. Each regulatory subunit has unique regulatory properties that can lead to extensive inhibition, significant changes in kinetics, and/or substantial shifts in the voltage dependencies of the inactivation process. This is Delayed-rectifier potassium channel regulatory subunit KCNS1 from Papio anubis (Olive baboon).